A 227-amino-acid polypeptide reads, in one-letter code: Cytochrome c oxidase subunit 2 (227 aa).

The Mitochondrial intermembrane portion of the chain corresponds to 1–14 (MAYPFELGFQDATS). The chain crosses the membrane as a helical span at residues 15 to 45 (PIMEELLHFHDHTLMIVFLISSLVLYIISLM). The Mitochondrial matrix portion of the chain corresponds to 46 to 59 (LTTKLTHTSTMDAQ). A helical transmembrane segment spans residues 60 to 87 (EVETIWTILPAIILILIALPSLRILYMM). Residues 88–227 (DEINDPSLTV…HFENWSSSML (140 aa)) are Mitochondrial intermembrane-facing. Positions 161, 196, 198, 200, 204, and 207 each coordinate Cu cation. Residue E198 coordinates Mg(2+).

It belongs to the cytochrome c oxidase subunit 2 family. In terms of assembly, component of the cytochrome c oxidase (complex IV, CIV), a multisubunit enzyme composed of 14 subunits. The complex is composed of a catalytic core of 3 subunits MT-CO1, MT-CO2 and MT-CO3, encoded in the mitochondrial DNA, and 11 supernumerary subunits COX4I, COX5A, COX5B, COX6A, COX6B, COX6C, COX7A, COX7B, COX7C, COX8 and NDUFA4, which are encoded in the nuclear genome. The complex exists as a monomer or a dimer and forms supercomplexes (SCs) in the inner mitochondrial membrane with NADH-ubiquinone oxidoreductase (complex I, CI) and ubiquinol-cytochrome c oxidoreductase (cytochrome b-c1 complex, complex III, CIII), resulting in different assemblies (supercomplex SCI(1)III(2)IV(1) and megacomplex MCI(2)III(2)IV(2)). Found in a complex with TMEM177, COA6, COX18, COX20, SCO1 and SCO2. Interacts with TMEM177 in a COX20-dependent manner. Interacts with COX20. Interacts with COX16. Cu cation serves as cofactor.

It is found in the mitochondrion inner membrane. It carries out the reaction 4 Fe(II)-[cytochrome c] + O2 + 8 H(+)(in) = 4 Fe(III)-[cytochrome c] + 2 H2O + 4 H(+)(out). Component of the cytochrome c oxidase, the last enzyme in the mitochondrial electron transport chain which drives oxidative phosphorylation. The respiratory chain contains 3 multisubunit complexes succinate dehydrogenase (complex II, CII), ubiquinol-cytochrome c oxidoreductase (cytochrome b-c1 complex, complex III, CIII) and cytochrome c oxidase (complex IV, CIV), that cooperate to transfer electrons derived from NADH and succinate to molecular oxygen, creating an electrochemical gradient over the inner membrane that drives transmembrane transport and the ATP synthase. Cytochrome c oxidase is the component of the respiratory chain that catalyzes the reduction of oxygen to water. Electrons originating from reduced cytochrome c in the intermembrane space (IMS) are transferred via the dinuclear copper A center (CU(A)) of subunit 2 and heme A of subunit 1 to the active site in subunit 1, a binuclear center (BNC) formed by heme A3 and copper B (CU(B)). The BNC reduces molecular oxygen to 2 water molecules using 4 electrons from cytochrome c in the IMS and 4 protons from the mitochondrial matrix. This Neotamias bulleri (Buller's chipmunk) protein is Cytochrome c oxidase subunit 2 (MT-CO2).